We begin with the raw amino-acid sequence, 1495 residues long: Ras GTPase-activating-like protein IQG1 (1495 aa).

A Calponin-homology (CH) domain is found at 108 to 221; it reads LCRVSEVKIW…ILISMINKKW (114 aa). Thr-264 carries the post-translational modification Phosphothreonine. At Ser-268 the chain carries Phosphoserine. Thr-299 carries the phosphothreonine modification. IQ domains follow at residues 447-467, 538-567, 568-597, 599-628, 629-658, 687-716, and 717-746; these read EQDI…VLSS, SHYP…KLND, ERES…AVHD, HKEN…SLGK, ENCN…PENN, EYNN…FYKR, and NVRS…CPNP. Residues 759–798 adopt a coiled-coil conformation; that stretch reads NGTATIEEVQNQLESCQASLDSENMKKERLLKSIRQQLNI. The region spanning 876-1100 is the Ras-GAP domain; the sequence is SYFTRFVCEM…PHIKDVLYNV (225 aa).

As to quaternary structure, interacts with AFR1. Interacts with AKR1. Interacts with activated CDC42. Interacts with calmodulin CMD1. Interacts with myosin MYO1 and its light chain MLC1. Interacts with BUD4. Interacts with INN1. Interacts with SEC3. Interacts with TEM1.

It is found in the bud neck. In terms of biological role, required for the assembly and the contraction of the actomyosin ring at the bud neck during cytokinesis. Seems to be involved in additional tasks during cell division like axial bud-site selection and targeted secretion by recruiting the spatial landmark BUD4, the septin CDC12 and the secretion landmark SEC3 to the bud neck. May be regulated by calcium ions. This chain is Ras GTPase-activating-like protein IQG1 (IQG1), found in Saccharomyces cerevisiae (strain ATCC 204508 / S288c) (Baker's yeast).